The following is a 208-amino-acid chain: Small ribosomal subunit protein uS4 (208 aa).

The region spanning 97 to 158 (TRLDNVIYRM…RAQKYLCVQE (62 aa)) is the S4 RNA-binding domain.

This sequence belongs to the universal ribosomal protein uS4 family. In terms of assembly, part of the 30S ribosomal subunit. Contacts protein S5. The interaction surface between S4 and S5 is involved in control of translational fidelity.

One of the primary rRNA binding proteins, it binds directly to 16S rRNA where it nucleates assembly of the body of the 30S subunit. Functionally, with S5 and S12 plays an important role in translational accuracy. The sequence is that of Small ribosomal subunit protein uS4 from Xylella fastidiosa (strain M23).